We begin with the raw amino-acid sequence, 186 residues long: Translation initiation factor IF-3 (186 aa).

Positions 1 to 21 are disordered; sequence MINRSSGKDRDRSRSGDKELR.

The protein belongs to the IF-3 family. Monomer.

It is found in the cytoplasm. Its function is as follows. IF-3 binds to the 30S ribosomal subunit and shifts the equilibrium between 70S ribosomes and their 50S and 30S subunits in favor of the free subunits, thus enhancing the availability of 30S subunits on which protein synthesis initiation begins. The protein is Translation initiation factor IF-3 of Borrelia turicatae (strain 91E135).